Here is a 359-residue protein sequence, read N- to C-terminus: DNA polymerase IV (359 aa).

The 181-residue stretch at I4–G184 folds into the UmuC domain. Residues D8 and D102 each coordinate Mg(2+). E103 is an active-site residue.

It belongs to the DNA polymerase type-Y family. In terms of assembly, monomer. The cofactor is Mg(2+).

The protein localises to the cytoplasm. It carries out the reaction DNA(n) + a 2'-deoxyribonucleoside 5'-triphosphate = DNA(n+1) + diphosphate. Functionally, poorly processive, error-prone DNA polymerase involved in untargeted mutagenesis. Copies undamaged DNA at stalled replication forks, which arise in vivo from mismatched or misaligned primer ends. These misaligned primers can be extended by PolIV. Exhibits no 3'-5' exonuclease (proofreading) activity. May be involved in translesional synthesis, in conjunction with the beta clamp from PolIII. The protein is DNA polymerase IV of Xanthomonas oryzae pv. oryzae (strain MAFF 311018).